Here is a 327-residue protein sequence, read N- to C-terminus: 4-diphosphocytidyl-2-C-methyl-D-erythritol kinase (327 aa).

The active site involves K14. 97–107 is a binding site for ATP; the sequence is PDGAGLGGGSA. D140 is an active-site residue.

Belongs to the GHMP kinase family. IspE subfamily.

The enzyme catalyses 4-CDP-2-C-methyl-D-erythritol + ATP = 4-CDP-2-C-methyl-D-erythritol 2-phosphate + ADP + H(+). The protein operates within isoprenoid biosynthesis; isopentenyl diphosphate biosynthesis via DXP pathway; isopentenyl diphosphate from 1-deoxy-D-xylulose 5-phosphate: step 3/6. Functionally, catalyzes the phosphorylation of the position 2 hydroxy group of 4-diphosphocytidyl-2C-methyl-D-erythritol. This is 4-diphosphocytidyl-2-C-methyl-D-erythritol kinase from Oleidesulfovibrio alaskensis (strain ATCC BAA-1058 / DSM 17464 / G20) (Desulfovibrio alaskensis).